Consider the following 533-residue polypeptide: Beta-1,4-mannosyl-glycoprotein 4-beta-N-acetylglucosaminyltransferase (533 aa).

Over 1–7 (MKMRRYK) the chain is Cytoplasmic. A helical; Signal-anchor for type II membrane protein transmembrane segment spans residues 8–23 (LFLMFCMAGLCLISFL). The Lumenal portion of the chain corresponds to 24 to 533 (HFFKTLSYVT…ARGKLDEAEV (510 aa)). Residues 119-158 (KPGTKMLERPPPGRPEEKPEGANGSSARRPPRYLLSARER) are disordered. N141, N241, N259, and N397 each carry an N-linked (GlcNAc...) asparagine glycan. Positions 507–533 (STAAGGWRHRGPEGRPPARGKLDEAEV) are disordered.

The protein belongs to the glycosyltransferase 17 family. Interacts with MGAT4D.

Its subcellular location is the golgi apparatus membrane. The enzyme catalyses N(4)-{beta-D-GlcNAc-(1-&gt;2)-alpha-D-Man-(1-&gt;3)-[beta-D-GlcNAc-(1-&gt;2)-alpha-D-Man-(1-&gt;6)]-beta-D-Man-(1-&gt;4)-beta-D-GlcNAc-(1-&gt;4)-beta-D-GlcNAc}-L-asparaginyl-[protein] + UDP-N-acetyl-alpha-D-glucosamine = N(4)-{beta-D-GlcNAc-(1-&gt;2)-alpha-D-Man-(1-&gt;3)-[beta-D-GlcNAc-(1-&gt;4)]-[beta-D-GlcNAc-(1-&gt;2)-alpha-D-Man-(1-&gt;6)]-beta-D-Man-(1-&gt;4)-beta-D-GlcNAc-(1-&gt;4)-beta-D-GlcNAc}-L-asparaginyl-[protein] + UDP + H(+). The protein operates within protein modification; protein glycosylation. Functionally, it is involved in the regulation of the biosynthesis and biological function of glycoprotein oligosaccharides. Catalyzes the addition of N-acetylglucosamine in beta 1-4 linkage to the beta-linked mannose of the trimannosyl core of N-linked sugar chains, called bisecting N-acetylglucosamine (GlcNAc). It is one of the most important enzymes involved in the regulation of the biosynthesis of glycoprotein oligosaccharides. The addition of this bisecting GlcNAc residue alters not only the composition, but also the conformation of the N-glycan. The introduction of the bisecting GlcNAc residue results in the suppression of further processing and elongation of N-glycans, precluding the formation of beta-1,6 GlcNAc branching, catalyzed by MGAT5 since it is unable to use the bisected oligosaccharide as a substrate. Addition of bisecting N-acetylglucosamine to CDH1/E-cadherin modulates CDH1 cell membrane location. Inhibits NeuAc-alpha-2,3-Gal-beta-1,4-GlcNAc- formation which modulates sialylation levels and plays a role in cell migration regulation. In brain, addition of bisecting N-acetylglucosamine to BACE1 blocks its lysosomal targeting in response to oxidative stress and further degradation which increases its location to early endosome and the APP cleavage. The sequence is that of Beta-1,4-mannosyl-glycoprotein 4-beta-N-acetylglucosaminyltransferase from Homo sapiens (Human).